Reading from the N-terminus, the 335-residue chain is Acetyl-coenzyme A carboxylase carboxyl transferase subunit alpha (335 aa).

The CoA carboxyltransferase C-terminal domain occupies 40-294 (QLETLATRRR…KASIERHLSE (255 aa)).

This sequence belongs to the AccA family. As to quaternary structure, acetyl-CoA carboxylase is a heterohexamer composed of biotin carboxyl carrier protein (AccB), biotin carboxylase (AccC) and two subunits each of ACCase subunit alpha (AccA) and ACCase subunit beta (AccD).

The protein resides in the cytoplasm. The enzyme catalyses N(6)-carboxybiotinyl-L-lysyl-[protein] + acetyl-CoA = N(6)-biotinyl-L-lysyl-[protein] + malonyl-CoA. The protein operates within lipid metabolism; malonyl-CoA biosynthesis; malonyl-CoA from acetyl-CoA: step 1/1. In terms of biological role, component of the acetyl coenzyme A carboxylase (ACC) complex. First, biotin carboxylase catalyzes the carboxylation of biotin on its carrier protein (BCCP) and then the CO(2) group is transferred by the carboxyltransferase to acetyl-CoA to form malonyl-CoA. In Prochlorococcus marinus (strain MIT 9515), this protein is Acetyl-coenzyme A carboxylase carboxyl transferase subunit alpha.